The primary structure comprises 328 residues: Tetraacyldisaccharide 4'-kinase (328 aa).

ATP is bound at residue 55-62; it reads TAGGNGKT.

The protein belongs to the LpxK family.

It catalyses the reaction a lipid A disaccharide + ATP = a lipid IVA + ADP + H(+). It functions in the pathway glycolipid biosynthesis; lipid IV(A) biosynthesis; lipid IV(A) from (3R)-3-hydroxytetradecanoyl-[acyl-carrier-protein] and UDP-N-acetyl-alpha-D-glucosamine: step 6/6. Its function is as follows. Transfers the gamma-phosphate of ATP to the 4'-position of a tetraacyldisaccharide 1-phosphate intermediate (termed DS-1-P) to form tetraacyldisaccharide 1,4'-bis-phosphate (lipid IVA). In Shigella flexneri serotype 5b (strain 8401), this protein is Tetraacyldisaccharide 4'-kinase.